The primary structure comprises 60 residues: Large ribosomal subunit protein uL30 (60 aa).

It belongs to the universal ribosomal protein uL30 family. Part of the 50S ribosomal subunit.

This Limosilactobacillus reuteri (strain DSM 20016) (Lactobacillus reuteri) protein is Large ribosomal subunit protein uL30.